The following is a 74-amino-acid chain: UPF0435 protein Bcer98_0391 (74 aa).

Belongs to the UPF0435 family.

In Bacillus cytotoxicus (strain DSM 22905 / CIP 110041 / 391-98 / NVH 391-98), this protein is UPF0435 protein Bcer98_0391.